We begin with the raw amino-acid sequence, 151 residues long: Large ribosomal subunit protein bL9 (151 aa).

This sequence belongs to the bacterial ribosomal protein bL9 family.

Its function is as follows. Binds to the 23S rRNA. The polypeptide is Large ribosomal subunit protein bL9 (Bordetella bronchiseptica (strain ATCC BAA-588 / NCTC 13252 / RB50) (Alcaligenes bronchisepticus)).